The sequence spans 291 residues: Acetyl-coenzyme A carboxylase carboxyl transferase subunit beta (291 aa).

In terms of domain architecture, CoA carboxyltransferase N-terminal spans V23–S291.

Belongs to the AccD/PCCB family. Acetyl-CoA carboxylase is a heterohexamer composed of biotin carboxyl carrier protein (AccB), biotin carboxylase (AccC) and two subunits each of ACCase subunit alpha (AccA) and ACCase subunit beta (AccD).

The protein localises to the cytoplasm. The catalysed reaction is N(6)-carboxybiotinyl-L-lysyl-[protein] + acetyl-CoA = N(6)-biotinyl-L-lysyl-[protein] + malonyl-CoA. Its pathway is lipid metabolism; malonyl-CoA biosynthesis; malonyl-CoA from acetyl-CoA: step 1/1. Component of the acetyl coenzyme A carboxylase (ACC) complex. Biotin carboxylase (BC) catalyzes the carboxylation of biotin on its carrier protein (BCCP) and then the CO(2) group is transferred by the transcarboxylase to acetyl-CoA to form malonyl-CoA. This Opitutus terrae (strain DSM 11246 / JCM 15787 / PB90-1) protein is Acetyl-coenzyme A carboxylase carboxyl transferase subunit beta.